Consider the following 122-residue polypeptide: Large ribosomal subunit protein uL14c (122 aa).

This sequence belongs to the universal ribosomal protein uL14 family. As to quaternary structure, part of the 50S ribosomal subunit.

It is found in the plastid. Its subcellular location is the chloroplast. In terms of biological role, binds to 23S rRNA. The chain is Large ribosomal subunit protein uL14c from Populus trichocarpa (Western balsam poplar).